Consider the following 393-residue polypeptide: Chorismate synthase (393 aa).

Residues R40 and R46 each contribute to the NADP(+) site. Residues 129 to 131, 249 to 250, G301, 316 to 320, and R342 contribute to the FMN site; these read RSS, QA, and KPIPT.

This sequence belongs to the chorismate synthase family. In terms of assembly, homotetramer. The cofactor is FMNH2.

The enzyme catalyses 5-O-(1-carboxyvinyl)-3-phosphoshikimate = chorismate + phosphate. The protein operates within metabolic intermediate biosynthesis; chorismate biosynthesis; chorismate from D-erythrose 4-phosphate and phosphoenolpyruvate: step 7/7. Catalyzes the anti-1,4-elimination of the C-3 phosphate and the C-6 proR hydrogen from 5-enolpyruvylshikimate-3-phosphate (EPSP) to yield chorismate, which is the branch point compound that serves as the starting substrate for the three terminal pathways of aromatic amino acid biosynthesis. This reaction introduces a second double bond into the aromatic ring system. The polypeptide is Chorismate synthase (Geotalea daltonii (strain DSM 22248 / JCM 15807 / FRC-32) (Geobacter daltonii)).